The chain runs to 812 residues: Probable inorganic carbon transporter subunit DabA (812 aa).

Zn(2+) is bound by residues Cys337, Asp339, His499, and Cys514.

It belongs to the inorganic carbon transporter (TC 9.A.2) DabA family. As to quaternary structure, forms a complex with DabB. Requires Zn(2+) as cofactor.

The protein resides in the cell inner membrane. In terms of biological role, part of an energy-coupled inorganic carbon pump. The protein is Probable inorganic carbon transporter subunit DabA of Xanthomonas euvesicatoria pv. vesicatoria (strain 85-10) (Xanthomonas campestris pv. vesicatoria).